Consider the following 1960-residue polypeptide: Myosin-9 (1960 aa).

Alanine 2 is subject to N-acetylalanine. Residues alanine 2 to leucine 838 form a mediates interaction with LIMCH1 region. Lysine 8 carries the N6-acetyllysine modification. Phosphotyrosine is present on tyrosine 11. The Myosin N-terminal SH3-like domain occupies alanine 27–proline 77. Residues serine 81–aspartate 776 enclose the Myosin motor domain. Lysine 102 bears the N6-acetyllysine mark. Position 174–181 (glycine 174–threonine 181) interacts with ATP. N6-acetyllysine is present on residues lysine 299, lysine 435, and lysine 613. Serine 628 carries the post-translational modification Phosphoserine. The tract at residues leucine 654–histidine 676 is actin-binding. The residue at position 754 (tyrosine 754) is a Phosphotyrosine. One can recognise an IQ domain in the interval isoleucine 779–alanine 808. Residues isoleucine 841 to leucine 1926 are a coiled coil. Lysine 850 is modified (N6-succinyllysine). Residues lysine 860, lysine 975, and lysine 1024 each carry the N6-acetyllysine modification. Positions arginine 1035–glycine 1055 are enriched in basic and acidic residues. Residues arginine 1035 to serine 1057 form a disordered region. Residue serine 1114 is modified to Phosphoserine. Residues glutamine 1117–glutamine 1167 form a disordered region. Basic and acidic residues predominate over residues serine 1122–leucine 1148. 2 positions are modified to N6-acetyllysine: lysine 1234 and lysine 1249. The interval leucine 1327 to lysine 1352 is disordered. A compositionally biased stretch (basic and acidic residues) spans lysine 1332 to lysine 1352. An N6-acetyllysine mark is found at lysine 1357, lysine 1392, lysine 1404, lysine 1410, lysine 1459, and lysine 1638. Residue lysine 1669 is modified to N6-succinyllysine. Serine 1714 carries the post-translational modification Phosphoserine. A disordered region spans residues leucine 1768–lysine 1788. Lysine 1793, lysine 1802, and lysine 1845 each carry N6-acetyllysine. Residues arginine 1877 to aspartate 1908 are disordered. Arginine 1923 is subject to Omega-N-methylarginine. Threonine 1939 bears the Phosphothreonine mark. Residues threonine 1939–glutamate 1960 form a disordered region. Phosphoserine is present on serine 1943. Positions aspartate 1948 to glutamate 1960 are enriched in basic and acidic residues.

It belongs to the TRAFAC class myosin-kinesin ATPase superfamily. Myosin family. In terms of assembly, myosin is a hexameric protein that consists of 2 heavy chain subunits (MHC), 2 alkali light chain subunits (MLC) and 2 regulatory light chain subunits (MLC-2). Interacts with RASIP1. Interacts with DDR1. Interacts with PDLIM2. Interacts with SVIL. Interacts with HTRA3. Interacts with Myo7a. Interacts with CFAP95. Interacts with LIMCH1; independently of the integration of MYH9 into the myosin complex. Interacts with RAB3A. Interacts with ZBED4. Interacts with S100A4; this interaction increases cell motility. In terms of processing, ISGylated. Ubiquitination.

It localises to the cytoplasm. The protein resides in the cytoskeleton. The protein localises to the cell cortex. Its subcellular location is the cytoplasmic vesicle. It is found in the secretory vesicle. It localises to the cortical granule. Functionally, cellular myosin that appears to play a role in cytokinesis, cell shape, and specialized functions such as secretion and capping. Required for cortical actin clearance prior to oocyte exocytosis. Promotes cell motility in conjunction with S100A4. During cell spreading, plays an important role in cytoskeleton reorganization, focal contact formation (in the margins but not the central part of spreading cells), and lamellipodial retraction; this function is mechanically antagonized by MYH10. The sequence is that of Myosin-9 (Myh9) from Mus musculus (Mouse).